A 448-amino-acid polypeptide reads, in one-letter code: Asparagine--tRNA ligase (448 aa).

Belongs to the class-II aminoacyl-tRNA synthetase family. Homodimer.

The protein resides in the cytoplasm. The enzyme catalyses tRNA(Asn) + L-asparagine + ATP = L-asparaginyl-tRNA(Asn) + AMP + diphosphate + H(+). The polypeptide is Asparagine--tRNA ligase (Streptococcus thermophilus (strain ATCC BAA-491 / LMD-9)).